The chain runs to 117 residues: Large ribosomal subunit protein uL18 (117 aa).

It belongs to the universal ribosomal protein uL18 family. In terms of assembly, part of the 50S ribosomal subunit; part of the 5S rRNA/L5/L18/L25 subcomplex. Contacts the 5S and 23S rRNAs.

This is one of the proteins that bind and probably mediate the attachment of the 5S RNA into the large ribosomal subunit, where it forms part of the central protuberance. This chain is Large ribosomal subunit protein uL18, found in Histophilus somni (strain 129Pt) (Haemophilus somnus).